We begin with the raw amino-acid sequence, 876 residues long: Exonuclease mut-7 homolog (876 aa).

Residues glycine 517 to alanine 571 form the 3'-5' exonuclease domain. 2 disordered regions span residues aspartate 578 to alanine 607 and serine 751 to glutamate 781.

It belongs to the mut-7 family. The cofactor is Mg(2+).

Functionally, possesses 3'-5' exoribonuclease activity. Required for 3'-end trimming of AGO1-bound miRNAs. This is Exonuclease mut-7 homolog (EXD3) from Homo sapiens (Human).